The sequence spans 418 residues: UPF0261 protein BMEII0128 (418 aa).

It belongs to the UPF0261 family.

The protein is UPF0261 protein BMEII0128 of Brucella melitensis biotype 1 (strain ATCC 23456 / CCUG 17765 / NCTC 10094 / 16M).